We begin with the raw amino-acid sequence, 323 residues long: 4-diphosphocytidyl-2-C-methyl-D-erythritol kinase (323 aa).

The active site involves lysine 25. Residue 110–120 coordinates ATP; it reads PVAGGMAGGSA. Residue aspartate 152 is part of the active site.

This sequence belongs to the GHMP kinase family. IspE subfamily.

It carries out the reaction 4-CDP-2-C-methyl-D-erythritol + ATP = 4-CDP-2-C-methyl-D-erythritol 2-phosphate + ADP + H(+). Its pathway is isoprenoid biosynthesis; isopentenyl diphosphate biosynthesis via DXP pathway; isopentenyl diphosphate from 1-deoxy-D-xylulose 5-phosphate: step 3/6. Its function is as follows. Catalyzes the phosphorylation of the position 2 hydroxy group of 4-diphosphocytidyl-2C-methyl-D-erythritol. This is 4-diphosphocytidyl-2-C-methyl-D-erythritol kinase from Mycobacterium leprae (strain Br4923).